The chain runs to 173 residues: Ribosome maturation factor RimM (173 aa).

In terms of domain architecture, PRC barrel spans 98-170 (VGDMTWDSFI…SLTVSLPEGL (73 aa)).

Belongs to the RimM family. In terms of assembly, binds ribosomal protein uS19.

Its subcellular location is the cytoplasm. An accessory protein needed during the final step in the assembly of 30S ribosomal subunit, possibly for assembly of the head region. Essential for efficient processing of 16S rRNA. May be needed both before and after RbfA during the maturation of 16S rRNA. It has affinity for free ribosomal 30S subunits but not for 70S ribosomes. This Parabacteroides distasonis (strain ATCC 8503 / DSM 20701 / CIP 104284 / JCM 5825 / NCTC 11152) protein is Ribosome maturation factor RimM.